A 72-amino-acid polypeptide reads, in one-letter code: MAKEEQIELEGVIVDTLPNTMFRVKLDNGHVITAHISGKMRKFYIRILTGDRVKVEMSPYDLTKGRITFRMK.

The region spanning methionine 1 to lysine 72 is the S1-like domain.

It belongs to the IF-1 family. As to quaternary structure, component of the 30S ribosomal translation pre-initiation complex which assembles on the 30S ribosome in the order IF-2 and IF-3, IF-1 and N-formylmethionyl-tRNA(fMet); mRNA recruitment can occur at any time during PIC assembly.

It is found in the cytoplasm. In terms of biological role, one of the essential components for the initiation of protein synthesis. Stabilizes the binding of IF-2 and IF-3 on the 30S subunit to which N-formylmethionyl-tRNA(fMet) subsequently binds. Helps modulate mRNA selection, yielding the 30S pre-initiation complex (PIC). Upon addition of the 50S ribosomal subunit IF-1, IF-2 and IF-3 are released leaving the mature 70S translation initiation complex. This is Translation initiation factor IF-1 from Alcanivorax borkumensis (strain ATCC 700651 / DSM 11573 / NCIMB 13689 / SK2).